A 258-amino-acid polypeptide reads, in one-letter code: uncharacterized protein (258 aa).

The N-terminal stretch at 1-19 (MRKIFLPLLLVALSPVAHS) is a signal peptide.

This is an uncharacterized protein from Escherichia coli (strain K12).